Here is a 394-residue protein sequence, read N- to C-terminus: 8-amino-7-oxononanoate synthase (394 aa).

Arginine 18 serves as a coordination point for substrate. 105–106 (GY) contributes to the pyridoxal 5'-phosphate binding site. Histidine 130 contributes to the substrate binding site. Residues serine 175, histidine 203, and threonine 232 each contribute to the pyridoxal 5'-phosphate site. The residue at position 235 (lysine 235) is an N6-(pyridoxal phosphate)lysine. Threonine 349 is a substrate binding site.

This sequence belongs to the class-II pyridoxal-phosphate-dependent aminotransferase family. BioF subfamily. Homodimer. Pyridoxal 5'-phosphate serves as cofactor.

The enzyme catalyses 6-carboxyhexanoyl-[ACP] + L-alanine + H(+) = (8S)-8-amino-7-oxononanoate + holo-[ACP] + CO2. It functions in the pathway cofactor biosynthesis; biotin biosynthesis. Its function is as follows. Catalyzes the decarboxylative condensation of pimeloyl-[acyl-carrier protein] and L-alanine to produce 8-amino-7-oxononanoate (AON), [acyl-carrier protein], and carbon dioxide. This chain is 8-amino-7-oxononanoate synthase, found in Marinobacter nauticus (strain ATCC 700491 / DSM 11845 / VT8) (Marinobacter aquaeolei).